The sequence spans 119 residues: Large ribosomal subunit protein uL24 (119 aa).

The protein belongs to the universal ribosomal protein uL24 family. Part of the 50S ribosomal subunit.

One of two assembly initiator proteins, it binds directly to the 5'-end of the 23S rRNA, where it nucleates assembly of the 50S subunit. Its function is as follows. Located at the polypeptide exit tunnel on the outside of the subunit. This is Large ribosomal subunit protein uL24 from Saccharolobus solfataricus (strain ATCC 35092 / DSM 1617 / JCM 11322 / P2) (Sulfolobus solfataricus).